Here is a 576-residue protein sequence, read N- to C-terminus: K(+)/H(+) antiporter NhaP2 (576 aa).

13 helical membrane passes run 6-26 (INSFFLIGALLTAVSVLLSPM), 34-54 (ILLIFLAVGILAGEDGPGGIL), 58-78 (YSTAYLVSNLALAIILLDGGM), 87-107 (VALWPALSLATFGVAITTSIT), 109-129 (MMAAWLFDLHWLQGLLVGAIV), 163-183 (PMAVFLTVTLIAILANVDTEM), 185-205 (FSFMFISFIKQFGLGICLGLG), 219-239 (LADGLYSILVLSGGLIIYAAS), 242-262 (LGGSGILSIYLVGLFLGNKPT), 271-291 (VLDGMTWVSQIGMFLVLGLLL), 299-319 (ILIPGFALAFGMILFARPVAV), 335-355 (WFISWVGLRGAVPIILAVFPM), and 359-379 (LPGAQLYFNLAFFVVLVSLLV). One can recognise an RCK C-terminal domain in the interval 405–486 (SGVEIYPSSE…LEALSNLFSQ (82 aa)).

The protein belongs to the monovalent cation:proton antiporter 1 (CPA1) transporter (TC 2.A.36) family. NhaP2 subfamily.

It localises to the cell inner membrane. It carries out the reaction K(+)(in) + H(+)(out) = K(+)(out) + H(+)(in). In terms of biological role, k(+)/H(+) antiporter that extrudes potassium in exchange for external protons and maintains the internal concentration of potassium under toxic levels. The protein is K(+)/H(+) antiporter NhaP2 of Shewanella baltica (strain OS223).